Here is a 163-residue protein sequence, read N- to C-terminus: Cell division protein SepF (163 aa).

The tract at residues 25–53 (SVAPHSGEERESAFSRRSAERAERTERPT) is disordered. Over residues 30–51 (SGEERESAFSRRSAERAERTER) the composition is skewed to basic and acidic residues.

This sequence belongs to the SepF family. Homodimer. Interacts with FtsZ.

The protein resides in the cytoplasm. Its function is as follows. Cell division protein that is part of the divisome complex and is recruited early to the Z-ring. Probably stimulates Z-ring formation, perhaps through the cross-linking of FtsZ protofilaments. Its function overlaps with FtsA. The chain is Cell division protein SepF from Heliobacterium modesticaldum (strain ATCC 51547 / Ice1).